We begin with the raw amino-acid sequence, 638 residues long: Threonine--tRNA ligase (638 aa).

The TGS domain maps to 1–61; that stretch reads MPIITLPDGT…DYDAEIKIIT (61 aa). The segment at 242–533 is catalytic; the sequence is DHRKIGKKMD…LIENYAGNFP (292 aa). Residues Cys-333, His-384, and His-510 each coordinate Zn(2+).

Belongs to the class-II aminoacyl-tRNA synthetase family. Homodimer. Requires Zn(2+) as cofactor.

Its subcellular location is the cytoplasm. The catalysed reaction is tRNA(Thr) + L-threonine + ATP = L-threonyl-tRNA(Thr) + AMP + diphosphate + H(+). In terms of biological role, catalyzes the attachment of threonine to tRNA(Thr) in a two-step reaction: L-threonine is first activated by ATP to form Thr-AMP and then transferred to the acceptor end of tRNA(Thr). Also edits incorrectly charged L-seryl-tRNA(Thr). The polypeptide is Threonine--tRNA ligase (Prochlorococcus marinus (strain MIT 9211)).